A 352-amino-acid chain; its full sequence is Cell division protein ZipA (352 aa).

Over 1 to 6 (MKDLQL) the chain is Periplasmic. Residues 7–27 (VLFVLGAIAIIAVLVHGFWSI) form a helical membrane-spanning segment. Residues 28–352 (RKQQPKSMKQ…KDYLRRLNAA (325 aa)) are Cytoplasmic-facing. Disordered stretches follow at residues 78–120 (KPVL…HVEP) and 138–160 (PAPT…TSTA). Positions 83–105 (TNLSQKPHSGTTKLTDTPLQDSL) are enriched in polar residues. Over residues 111 to 120 (HKTEPEHVEP) the composition is skewed to basic and acidic residues. Residues 141–160 (TASTSMNTPKKIFNPSTSTA) show a composition bias toward polar residues.

This sequence belongs to the ZipA family. As to quaternary structure, interacts with FtsZ via their C-terminal domains.

Its subcellular location is the cell inner membrane. Its function is as follows. Essential cell division protein that stabilizes the FtsZ protofilaments by cross-linking them and that serves as a cytoplasmic membrane anchor for the Z ring. Also required for the recruitment to the septal ring of downstream cell division proteins. The protein is Cell division protein ZipA of Shewanella frigidimarina (strain NCIMB 400).